The following is a 217-amino-acid chain: Lipid A acyltransferase PagP (217 aa).

The first 24 residues, 1–24 (MYLKRILITLSLITLPIVPCLSYA), serve as a signal peptide directing secretion. Residues His89, Asp132, and Ser133 contribute to the active site.

This sequence belongs to the lipid A palmitoyltransferase family. Homodimer.

It localises to the cell outer membrane. The enzyme catalyses a lipid A + a 1,2-diacyl-sn-glycero-3-phosphocholine = a hepta-acyl lipid A + a 2-acyl-sn-glycero-3-phosphocholine. It carries out the reaction a lipid IVA + a 1,2-diacyl-sn-glycero-3-phosphocholine = a lipid IVB + a 2-acyl-sn-glycero-3-phosphocholine. It catalyses the reaction a lipid IIA + a 1,2-diacyl-sn-glycero-3-phosphocholine = a lipid IIB + a 2-acyl-sn-glycero-3-phosphocholine. Its function is as follows. Transfers a fatty acid residue from the sn-1 position of a phospholipid to the N-linked hydroxyfatty acid chain on the proximal unit of lipid A or its precursors. This chain is Lipid A acyltransferase PagP, found in Pectobacterium atrosepticum (strain SCRI 1043 / ATCC BAA-672) (Erwinia carotovora subsp. atroseptica).